The sequence spans 328 residues: MSKAPMRVAITGAAGQIGYSLLFRIASGEMLGKDQPVILQLLDLPQAQQAVKGVMMELEDCAFPLLAGMVATDDPNVAFKDADVCLLVGARPRTKGMERADLLTANGAIFTVQGKAIAENAKEDVKVLVVGNPCNTNAFIAAAAAKKVGRTNPNNYHGMLRLDHNRALSQLAGKTGRAVSSLKKLVVWGNHSPTMYADYRFCTSNGDSVKALVNDHAWNNDVFLPTVGKRGAAIIEARGLSSAASAANAAIDHVRDWVLGSDEWVTMGVPSDGSYGIPAGIVFGFPCECKGGKFSIIQGLEIDEYSREKINFTLKELTDEAEAVKDML.

12–18 contributes to the NAD(+) binding site; the sequence is GAAGQIG. Arg-93 and Arg-99 together coordinate substrate. Residues Asn-106, Gln-113, and 130-132 each bind NAD(+); that span reads VGN. 2 residues coordinate substrate: Asn-132 and Arg-166. The active-site Proton acceptor is the His-191.

Belongs to the LDH/MDH superfamily. MDH type 2 family.

The catalysed reaction is (S)-malate + NAD(+) = oxaloacetate + NADH + H(+). In terms of biological role, catalyzes the reversible oxidation of malate to oxaloacetate. This Dechloromonas aromatica (strain RCB) protein is Malate dehydrogenase.